We begin with the raw amino-acid sequence, 388 residues long: MKLPALLILGVAASTMVLAAIAPDQVPLNDAKKDELPEKFLIELAPGDTRWVTEDEKWELKREGLKFFDITAEVEQGFLPKVFPTPAVVNFPSELNRTAEVKQLASQLSKENMFNHLTNFTSFHTRYYKSTAGTQSATWLFEQVQQTVNNSLAVKYGAKVETFNHSWSQFSIIASIPGRTNKTVVVGAHQDSINMYLPTIQAPGADDDGSGTVTILEALRVLLQSDAVAQGNATNTIEFHWYSAEEAGLLGSQAVFSKYKNENRDIKSMLQQDMTGYSQGTLDAGEQESVGVITDYVHSGLTEFIMKVITGYCDIPFVLTKCGYACSDHASASRYGYPSAFVIESKFEHSSQRIHTMWDTVEYLDFDHMLQHAKMTLGLVYELAFAEL.

The N-terminal stretch at 1–19 is a signal peptide; the sequence is MKLPALLILGVAASTMVLA. The propeptide occupies 20 to 88; that stretch reads AIAPDQVPLN…LPKVFPTPAV (69 aa). N-linked (GlcNAc...) asparagine glycosylation is found at asparagine 96, asparagine 119, asparagine 149, asparagine 164, and asparagine 181. Zn(2+) is bound by residues histidine 189 and aspartate 207. Asparagine 232 is a glycosylation site (N-linked (GlcNAc...) asparagine). Residues glutamate 246 and aspartate 273 each contribute to the Zn(2+) site. Cysteine 322 and cysteine 326 are oxidised to a cystine. Histidine 355 is a Zn(2+) binding site.

Belongs to the peptidase M28 family. M28E subfamily. Monomer. Zn(2+) serves as cofactor.

The protein localises to the secreted. In terms of biological role, extracellular aminopeptidase that allows assimilation of proteinaceous substrates. The chain is Leucine aminopeptidase 1 (LAP1) from Paracoccidioides brasiliensis (strain Pb03).